The following is a 115-amino-acid chain: UPF0122 protein NT01CX_2214 (115 aa).

Belongs to the UPF0122 family.

In terms of biological role, might take part in the signal recognition particle (SRP) pathway. This is inferred from the conservation of its genetic proximity to ftsY/ffh. May be a regulatory protein. The sequence is that of UPF0122 protein NT01CX_2214 from Clostridium novyi (strain NT).